The sequence spans 691 residues: Elongation factor G (691 aa).

Residues 8-282 (EKTRNIGIMA…AVVDYLPSPV (275 aa)) form the tr-type G domain. GTP contacts are provided by residues 17–24 (AHIDAGKT), 81–85 (DTPGH), and 135–138 (NKMD).

Belongs to the TRAFAC class translation factor GTPase superfamily. Classic translation factor GTPase family. EF-G/EF-2 subfamily.

It is found in the cytoplasm. Its function is as follows. Catalyzes the GTP-dependent ribosomal translocation step during translation elongation. During this step, the ribosome changes from the pre-translocational (PRE) to the post-translocational (POST) state as the newly formed A-site-bound peptidyl-tRNA and P-site-bound deacylated tRNA move to the P and E sites, respectively. Catalyzes the coordinated movement of the two tRNA molecules, the mRNA and conformational changes in the ribosome. In Caldicellulosiruptor bescii (strain ATCC BAA-1888 / DSM 6725 / KCTC 15123 / Z-1320) (Anaerocellum thermophilum), this protein is Elongation factor G.